Here is a 419-residue protein sequence, read N- to C-terminus: 3-isopropylmalate dehydratase large subunit (419 aa).

Cys300, Cys360, and Cys363 together coordinate [4Fe-4S] cluster.

The protein belongs to the aconitase/IPM isomerase family. LeuC type 2 subfamily. In terms of assembly, heterodimer of LeuC and LeuD. It depends on [4Fe-4S] cluster as a cofactor.

The catalysed reaction is (2R,3S)-3-isopropylmalate = (2S)-2-isopropylmalate. It participates in amino-acid biosynthesis; L-leucine biosynthesis; L-leucine from 3-methyl-2-oxobutanoate: step 2/4. Its function is as follows. Catalyzes the isomerization between 2-isopropylmalate and 3-isopropylmalate, via the formation of 2-isopropylmaleate. This is 3-isopropylmalate dehydratase large subunit from Nitratidesulfovibrio vulgaris (strain DP4) (Desulfovibrio vulgaris).